Consider the following 344-residue polypeptide: Beta-1,4-galactosyltransferase 4 (344 aa).

Residues 1–12 (MGCNPPYHLSYR) are Cytoplasmic-facing. A helical; Signal-anchor for type II membrane protein transmembrane segment spans residues 13–38 (LRLLLLFTLCLTVVGWATSNYFVGAI). Residues 39–344 (QVIPKAKDFM…NITVDFWTAA (306 aa)) lie on the Lumenal side of the membrane. Cys-77 and Cys-118 are oxidised to a cystine. Residues 129–133 (PHRNR), 168–170 (FNR), and 195–196 (VD) contribute to the UDP-alpha-D-galactose site. An intrachain disulfide couples Cys-189 to Cys-208. Residue Asp-196 coordinates Mn(2+). The N-linked (GlcNAc...) asparagine glycan is linked to Asn-220. Positions 224 and 256 each coordinate UDP-alpha-D-galactose. Position 258–261 (258–261 (GEDD)) interacts with N-acetyl-D-glucosamine. His-289 serves as a coordination point for Mn(2+). Residue 289 to 291 (HTR) coordinates UDP-alpha-D-galactose. Arg-301 provides a ligand contact to N-acetyl-D-glucosamine. An N-linked (GlcNAc...) asparagine glycan is attached at Asn-335.

The protein belongs to the glycosyltransferase 7 family. As to quaternary structure, interacts with SLC35A2/UGT1. Requires Mn(2+) as cofactor.

Its subcellular location is the golgi apparatus membrane. It is found in the secreted. It catalyses the reaction N-acetyl-D-glucosamine + UDP-alpha-D-galactose = beta-D-galactosyl-(1-&gt;4)-N-acetyl-D-glucosamine + UDP + H(+). The catalysed reaction is a beta-D-GlcNAc-(1-&gt;3)-beta-D-Gal-(1-&gt;4)-beta-D-Glc-(1&lt;-&gt;1)-Cer(d18:1(4E)) + UDP-alpha-D-galactose = a neolactoside nLc4Cer(d18:1(4E)) + UDP + H(+). The enzyme catalyses 3-O-{beta-D-galactosyl-(1-&gt;3)-[6-O-sulfo-N-acetyl-beta-D-glucosaminyl-(1-&gt;6)]-N-acetyl-alpha-D-galactosaminyl}-L-seryl-[protein] + UDP-alpha-D-galactose = 3-O-{beta-D-galactosyl-(1-&gt;3)-[beta-D-galactosyl-(1-&gt;4)-6-O-sulfo-N-acetyl-beta-D-glucosaminyl-(1-&gt;6)]-N-acetyl-alpha-D-galactosaminyl}-L-seryl-[protein] + UDP + H(+). It carries out the reaction 3-O-{beta-D-galactosyl-(1-&gt;3)-[6-O-sulfo-N-acetyl-beta-D-glucosaminyl-(1-&gt;6)]-N-acetyl-alpha-D-galactosaminyl}-L-threonyl-[protein] + UDP-alpha-D-galactose = 3-O-{beta-D-galactosyl-(1-&gt;3)-[beta-D-galactosyl-(1-&gt;4)-6-O-sulfo-N-acetyl-beta-D-glucosaminyl-(1-&gt;6)]-N-acetyl-alpha-D-galactosaminyl}-L-threonyl-[protein] + UDP + H(+). Its pathway is protein modification; protein glycosylation. It functions in the pathway glycolipid biosynthesis. Its function is as follows. Galactose (Gal) transferase involved in the synthesis of terminal N-acetyllactosamine (LacNac) unit present on glycan chains of glycoproteins and glycosphingolipids. Catalyzes the transfer of Gal residue via a beta1-&gt;4 linkage from UDP-Gal to the non-reducing terminal N-acetyl glucosamine 6-O-sulfate (6-O-sulfoGlcNAc) in the linearly growing chain of both N- and O-linked keratan sulfate proteoglycans. Cooperates with B3GNT7 N-acetyl glucosamine transferase and CHST6 and CHST1 sulfotransferases to construct and elongate mono- and disulfated disaccharide units [-&gt;3Galbeta1-&gt;4(6-sulfoGlcNAcbeta)1-&gt;] and [-&gt;3(6-sulfoGalbeta)1-&gt;4(6-sulfoGlcNAcbeta)1-&gt;] within keratan sulfate polymer. Transfers Gal residue via a beta1-&gt;4 linkage to terminal 6-O-sulfoGlcNAc within the LacNac unit of core 2 O-glycans forming 6-sulfo-sialyl-Lewis X (sLex). May contribute to the generation of sLex epitope on mucin-type glycoproteins that serve as ligands for SELL/L-selectin, a major regulator of leukocyte migration. In the biosynthesis pathway of neolacto-series glycosphingolipids, transfers Gal residue via a beta1-&gt;4 linkage to terminal GlcNAc of a lactotriaosylceramide (Lc3Cer) acceptor to form a neolactotetraosylceramide. In Mus musculus (Mouse), this protein is Beta-1,4-galactosyltransferase 4.